Here is a 416-residue protein sequence, read N- to C-terminus: Adenylosuccinate synthetase (416 aa).

Residues 13–19 and 41–43 each bind GTP; these read GDEGKGK and GHT. The active-site Proton acceptor is D14. Positions 14 and 41 each coordinate Mg(2+). IMP is bound by residues 14-17, 39-42, T126, R140, Q220, T235, and R299; these read DEGK and NAGH. H42 functions as the Proton donor in the catalytic mechanism. 295 to 301 contacts substrate; the sequence is TTTGRPR. Residues R301, 327–329, and 405–407 each bind GTP; these read KLD and STS.

The protein belongs to the adenylosuccinate synthetase family. In terms of assembly, homodimer. It depends on Mg(2+) as a cofactor.

Its subcellular location is the cytoplasm. It carries out the reaction IMP + L-aspartate + GTP = N(6)-(1,2-dicarboxyethyl)-AMP + GDP + phosphate + 2 H(+). Its pathway is purine metabolism; AMP biosynthesis via de novo pathway; AMP from IMP: step 1/2. Functionally, plays an important role in the de novo pathway of purine nucleotide biosynthesis. Catalyzes the first committed step in the biosynthesis of AMP from IMP. This chain is Adenylosuccinate synthetase, found in Sulfurovum sp. (strain NBC37-1).